Consider the following 381-residue polypeptide: Succinyl-diaminopimelate desuccinylase (381 aa).

Residue His72 coordinates Zn(2+). Residue Asp74 is part of the active site. Asp105 provides a ligand contact to Zn(2+). Glu139 acts as the Proton acceptor in catalysis. Residues Glu140, Glu168, and His354 each contribute to the Zn(2+) site.

This sequence belongs to the peptidase M20A family. DapE subfamily. Homodimer. It depends on Zn(2+) as a cofactor. The cofactor is Co(2+).

The catalysed reaction is N-succinyl-(2S,6S)-2,6-diaminopimelate + H2O = (2S,6S)-2,6-diaminopimelate + succinate. It functions in the pathway amino-acid biosynthesis; L-lysine biosynthesis via DAP pathway; LL-2,6-diaminopimelate from (S)-tetrahydrodipicolinate (succinylase route): step 3/3. Functionally, catalyzes the hydrolysis of N-succinyl-L,L-diaminopimelic acid (SDAP), forming succinate and LL-2,6-diaminopimelate (DAP), an intermediate involved in the bacterial biosynthesis of lysine and meso-diaminopimelic acid, an essential component of bacterial cell walls. This is Succinyl-diaminopimelate desuccinylase from Shewanella sp. (strain ANA-3).